The sequence spans 1065 residues: Tubulin glycylase 3C (1065 aa).

6 disordered regions span residues 1 to 146 (MSSL…REDK), 158 to 182 (IREQ…TKSK), 301 to 326 (STQK…DIAK), 341 to 360 (EKKR…KEQL), 381 to 482 (FFVD…GNGS), and 708 to 755 (NKQK…EKQM). Low complexity predominate over residues 23–53 (QEGNQEDLNNQNDHNLNNNELDSLSSPPSDN). A compositionally biased stretch (acidic residues) spans 54-63 (YNEEEFEQED). The segment covering 73–92 (QNASQNNISQTQRISQTQLP) has biased composition (polar residues). Over residues 122-146 (LMEKKKKEQEEKEKKELKLKKREDK) the composition is skewed to basic and acidic residues. A compositionally biased stretch (polar residues) spans 166-179 (LESQTEQSDHSNVT). Residues 313 to 326 (EGDKEKDDKKDIAK) show a composition bias toward basic and acidic residues. Residues 385–403 (VPEKKPKKEKKKNESKEDN) are compositionally biased toward basic and acidic residues. A compositionally biased stretch (polar residues) spans 404 to 423 (IQITSPKLNSTKSLSSQITR). The segment covering 424-450 (KTNDAKKVEKLPKIKDSNKENHSKERN) has biased composition (basic and acidic residues). A compositionally biased stretch (acidic residues) spans 451–479 (EDNEEGDDGEYECDEGDEGASDGEDEDDG). A TTL domain is found at 633–1009 (YFEKDPDIEK…DYGMEKSKKA (377 aa)). Residues 709–721 (KQKPKKKKKKSKK) are compositionally biased toward basic residues. Residues 722–733 (DKQQGDTEKKEE) are compositionally biased toward basic and acidic residues. A compositionally biased stretch (acidic residues) spans 734–754 (EEGEAEDEEEDEEDEEEEEKQ). ATP-binding positions include 821-824 (QKYI), lysine 834, and aspartate 836.

The protein resides in the cell projection. The protein localises to the cilium. It is found in the cytoplasm. It localises to the cytoskeleton. Its subcellular location is the cilium axoneme. Its function is as follows. Probable glycylase which modifies tubulin, generating side chains of glycine on the gamma-carboxyl groups of specific glutamate residues within the C-terminal tail of tubulin. The protein is Tubulin glycylase 3C (TTLL3C) of Tetrahymena thermophila (strain SB210).